The following is a 368-amino-acid chain: 4-hydroxy-3-methylbut-2-en-1-yl diphosphate synthase (flavodoxin) (368 aa).

The [4Fe-4S] cluster site is built by C268, C271, C303, and E310.

It belongs to the IspG family. Requires [4Fe-4S] cluster as cofactor.

It carries out the reaction (2E)-4-hydroxy-3-methylbut-2-enyl diphosphate + oxidized [flavodoxin] + H2O + 2 H(+) = 2-C-methyl-D-erythritol 2,4-cyclic diphosphate + reduced [flavodoxin]. It participates in isoprenoid biosynthesis; isopentenyl diphosphate biosynthesis via DXP pathway; isopentenyl diphosphate from 1-deoxy-D-xylulose 5-phosphate: step 5/6. Functionally, converts 2C-methyl-D-erythritol 2,4-cyclodiphosphate (ME-2,4cPP) into 1-hydroxy-2-methyl-2-(E)-butenyl 4-diphosphate. This is 4-hydroxy-3-methylbut-2-en-1-yl diphosphate synthase (flavodoxin) from Listeria monocytogenes serovar 1/2a (strain ATCC BAA-679 / EGD-e).